A 231-amino-acid chain; its full sequence is Transmembrane protein 225 (231 aa).

Residues 1-13 (MVHILVRKVEATN) lie on the Cytoplasmic side of the membrane. A helical transmembrane segment spans residues 14–34 (MFFSSWTLVFLAVGIIIEEWA). Residues 35–67 (ELKLGPQKPTITHSPWICCTPLWPSDGLEVIRN) are Extracellular-facing. The chain crosses the membrane as a helical span at residues 68–88 (ILIVVLSLSFMHNLLLGFEFT). Over 89–97 (YMIPQTKYT) the chain is Cytoplasmic. A helical membrane pass occupies residues 98 to 118 (LIMTACLAFLTGILLLGALLL). Residues 119 to 135 (YHHMLRQGESVYYSSYK) are Extracellular-facing. Residues 136–156 (ISWIIFTAYLNVLFLFISGFL) traverse the membrane as a helical segment. Over 157 to 231 (SLLQYKQPID…IQARRVTWAL (75 aa)) the chain is Cytoplasmic. The RVxF signature appears at 225-229 (RRVTW).

In terms of assembly, interacts (via RVxF motif) with PPP1CC.

The protein localises to the cytoplasmic vesicle. It localises to the secretory vesicle. The protein resides in the acrosome membrane. Its function is as follows. Probably inhibits protein phosphatase 1 (PP1) in sperm via binding to catalytic subunit PPP1CC. The sequence is that of Transmembrane protein 225 (TMEM225) from Bos taurus (Bovine).